The following is a 6306-amino-acid chain: Adhesion G-protein coupled receptor V1 (6306 aa).

An N-terminal signal peptide occupies residues 1–29; it reads MSVFLGPGMPSASLLVNLLSALLILFVFG. Calx-beta domains are found at residues 30-117, 133-237, 262-362, 388-488, 645-745, 763-861, 876-979, 993-1093, 1108-1208, 1444-1544, 1564-1665, 1710-1809, 1850-1952, 1966-2079, 2107-2206, 2222-2324, 2441-2541, 2584-2676, 2689-2789, 2814-2925, 2947-3048, and 3063-3172; these read ETEI…FHLT, VTVT…IQLK, PVRF…HIML, KPYG…LQIL, PAIA…TLSL, DLII…VVLS, VNIT…VILL, ATLR…IILL, TVII…LKLV, AMPR…FILK, TIQK…RVTL, TGLP…VELL, ILVT…VSVL, TLTV…IELL, QLII…VQLM, VIII…VQLT, TLCL…FLIS, NISP…VSLV, DTVR…QVIL, LTVE…VNLT, TAQV…LILT, and LIIV…CTLF. Over 30-5908 the chain is Extracellular; sequence ETEIRFTGQT…TDNLSSYNEA (5879 aa). 6 EAR repeats span residues 3255-3296, 3297-3345, 3348-3393, 3395-3439, 3441-3488, and 3492-3534; these read VFSV…RWQG, IFIP…TFTS, KLFL…RWNG, SFVL…RWSG, GFIN…IWEM, and SFRY…CWNS. 13 Calx-beta domains span residues 3525-3625, 3639-3739, 3775-3875, 3899-4006, 4020-4123, 4139-4239, 4255-4354, 4387-4489, 4512-4612, 4634-4734, 4992-5095, 5288-5332, and 5368-5468; these read DMSA…KVQL, SVTI…IVTL, GLVG…VTIT, AEIM…ISLI, VTVV…IQLI, IIIR…EFQL, ANIT…LTIT, RIII…ILLT, SPFG…IIKL, EFGD…VIQL, SGFI…INLT, AVEE…YVFL, and IGFS…FVEL. Positions 5747-5903 constitute a GAIN-B domain; sequence SILALHWYPQ…AVYARTDNLS (157 aa). 2 disulfides stabilise this stretch: Cys5856–Cys5885 and Cys5873–Cys5887. The segment at 5856 to 5903 is GPS; that stretch reads CLLWNQAAASWLSDSQFCKVVEETADYVECACSHMSVYAVYARTDNLS. A helical transmembrane segment spans residues 5909-5929; the sequence is FFTSGFICISGLCLAVLSHIF. Topologically, residues 5930–5939 are cytoplasmic; it reads CARYSMFAAK. Residues 5940-5960 form a helical membrane-spanning segment; sequence LLTHMMAASLGTQILFLASAY. At 5961-5979 the chain is on the extracellular side; that stretch reads ASPQLAEESCSAMAAVTHY. Residues 5980–6000 form a helical membrane-spanning segment; sequence LYLCQFSWMLIQSVNFWYVLV. Topologically, residues 6001–6010 are cytoplasmic; sequence MNDEHTERRY. Residues 6011–6031 form a helical membrane-spanning segment; sequence LLFFLLSWGLPAFVVILLIVI. Residues 6032–6059 are Extracellular-facing; the sequence is LKGIYHQSMSQIYGLIHGDLCFIPNVYA. The chain crosses the membrane as a helical span at residues 6060–6080; it reads ALFTAALVPLTCLVVVFVVFI. Residues 6081 to 6104 are Cytoplasmic-facing; it reads HAYQVKPQWKAYDDVFRGRTNAAE. Residues 6105-6125 form a helical membrane-spanning segment; sequence IPLILYLFALISVTWLWGGLH. The Extracellular portion of the chain corresponds to 6126-6133; the sequence is MAYRHFWM. A helical membrane pass occupies residues 6134–6154; sequence LVLFVIFNSLQGLYVFMVYFI. Topologically, residues 6155–6306 are cytoplasmic; it reads LHNQMCCPMK…RRIPIADTHL (152 aa). Residues 6216–6248 are disordered; the sequence is ASFQQGSQASPDLKPSPQNGATFPSSGGYGQGS. The span at 6217 to 6240 shows a compositional bias: polar residues; it reads SFQQGSQASPDLKPSPQNGATFPS.

Belongs to the G-protein coupled receptor 2 family. Adhesion G-protein coupled receptor (ADGR) subfamily. As to quaternary structure, forms a heterodimer, consisting of a large extracellular region (alpha subunit) non-covalently linked to a seven-transmembrane moiety (beta subunit). Component of USH2 complex, composed of ADGRV1, PDZD7, USH2A and WHRN. Interacts with USH2A and WHRN. Interacts (via the cytoplasmic region) with PDZD7. Interacts (via the cytoplasmic region) with MYO7A (via MyTH4-FERM domains). In terms of processing, autoproteolytically cleaved into 2 subunits, an extracellular alpha subunit and a seven-transmembrane subunit. In terms of tissue distribution, expressed at low levels in adult tissues.

It localises to the cell membrane. The protein localises to the cell projection. Its subcellular location is the stereocilium membrane. It is found in the photoreceptor inner segment. Its function is as follows. G-protein coupled receptor which has an essential role in the development of hearing and vision. Couples to G-alpha(i)-proteins, GNAI1/2/3, G-alpha(q)-proteins, GNAQ, as well as G-alpha(s)-proteins, GNAS, inhibiting adenylate cyclase (AC) activity and cAMP production. Required for the hair bundle ankle formation, which connects growing stereocilia in developing cochlear hair cells of the inner ear. In response to extracellular calcium, activates kinases PKA and PKC to regulate myelination by inhibiting the ubiquitination of MAG, thus enhancing the stability of this protein in myelin-forming cells of the auditory pathway. In retina photoreceptors, the USH2 complex is required for the maintenance of periciliary membrane complex that seems to play a role in regulating intracellular protein transport. Involved in the regulation of bone metabolism. Functionally, cleaved ADGRV1 beta-subunit couples with G-alpha(i)-proteins, GNAI1/2/3, and constitutively inhibits adenylate cyclase (AC) activity with a stronger effect than full ADGRV1. The sequence is that of Adhesion G-protein coupled receptor V1 from Homo sapiens (Human).